We begin with the raw amino-acid sequence, 693 residues long: Elongation factor G (693 aa).

The 275-residue stretch at 8–282 (EHTRNIGIMA…AVIDFMPSPT (275 aa)) folds into the tr-type G domain. GTP contacts are provided by residues 17–24 (AHIDAGKT), 81–85 (DTPGH), and 135–138 (NKMD).

Belongs to the TRAFAC class translation factor GTPase superfamily. Classic translation factor GTPase family. EF-G/EF-2 subfamily.

The protein resides in the cytoplasm. In terms of biological role, catalyzes the GTP-dependent ribosomal translocation step during translation elongation. During this step, the ribosome changes from the pre-translocational (PRE) to the post-translocational (POST) state as the newly formed A-site-bound peptidyl-tRNA and P-site-bound deacylated tRNA move to the P and E sites, respectively. Catalyzes the coordinated movement of the two tRNA molecules, the mRNA and conformational changes in the ribosome. The polypeptide is Elongation factor G (Ruminiclostridium cellulolyticum (strain ATCC 35319 / DSM 5812 / JCM 6584 / H10) (Clostridium cellulolyticum)).